The primary structure comprises 146 residues: Hemoglobin subunit beta (146 aa).

Val1 bears the N-acetylvaline mark. One can recognise a Globin domain in the interval 2–146 (QLSGEEKAAV…VANALAHKYH (145 aa)). Position 44 is a phosphoserine (Ser44). At Lys59 the chain carries N6-acetyllysine. His63 serves as a coordination point for heme b. N6-acetyllysine is present on Lys82. His92 lines the heme b pocket. An S-nitrosocysteine modification is found at Cys93. At Lys144 the chain carries N6-acetyllysine.

This sequence belongs to the globin family. In terms of assembly, heterotetramer of two alpha chains and two beta chains. Red blood cells.

Its function is as follows. Involved in oxygen transport from the lung to the various peripheral tissues. This is Hemoglobin subunit beta (HBB) from Equus hemionus kulan (Turkmenian kulan).